The following is a 184-amino-acid chain: ATP synthase subunit b, chloroplastic (184 aa).

Residues 27 to 49 (LATNPINLSVVLGVLIFFGKGVL) traverse the membrane as a helical segment.

This sequence belongs to the ATPase B chain family. In terms of assembly, F-type ATPases have 2 components, F(1) - the catalytic core - and F(0) - the membrane proton channel. F(1) has five subunits: alpha(3), beta(3), gamma(1), delta(1), epsilon(1). F(0) has four main subunits: a(1), b(1), b'(1) and c(10-14). The alpha and beta chains form an alternating ring which encloses part of the gamma chain. F(1) is attached to F(0) by a central stalk formed by the gamma and epsilon chains, while a peripheral stalk is formed by the delta, b and b' chains.

Its subcellular location is the plastid. The protein resides in the chloroplast thylakoid membrane. F(1)F(0) ATP synthase produces ATP from ADP in the presence of a proton or sodium gradient. F-type ATPases consist of two structural domains, F(1) containing the extramembraneous catalytic core and F(0) containing the membrane proton channel, linked together by a central stalk and a peripheral stalk. During catalysis, ATP synthesis in the catalytic domain of F(1) is coupled via a rotary mechanism of the central stalk subunits to proton translocation. In terms of biological role, component of the F(0) channel, it forms part of the peripheral stalk, linking F(1) to F(0). The chain is ATP synthase subunit b, chloroplastic from Gossypium barbadense (Sea Island cotton).